We begin with the raw amino-acid sequence, 410 residues long: Platelet-activating factor acetylhydrolase IB subunit beta (410 aa).

Residues 1 to 38 (MVLSQRQRDELNRAIADYLRSNGYEEAYSVFKKEAELD) form a required for self-association and interaction with PAFAH1B2 and PAFAH1B3 region. Residues 1 to 66 (MVLSQRQRDE…SVIRLQKKVM (66 aa)) form an interaction with NDE1 region. The segment at 1 to 102 (MVLSQRQRDE…EWIPRPPEKY (102 aa)) is interaction with NDEL1. The LisH domain maps to 7–39 (QRDELNRAIADYLRSNGYEEAYSVFKKEAELDM). Position 53 is an N6-acetyllysine (Lys-53). Residues 56 to 82 (TSVIRLQKKVMELESKLNEAKEEFTSG) adopt a coiled-coil conformation. Residues 83–410 (GPLGQKRDPK…DQTVKVWECR (328 aa)) form an interaction with dynein and dynactin region. 7 WD repeats span residues 106 to 147 (GHRS…RTLK), 148 to 187 (GHTD…CIRT), 190 to 229 (GHDH…CVKT), 232 to 271 (GHRE…CKAE), 274 to 333 (EHEH…CLMT), 336 to 377 (GHDN…KTLN), and 378 to 410 (AHEH…WECR). Ser-109 carries the phosphoserine modification. Residues 367–409 (YKNKRCMKTLNAHEHFVTSLDFHKTAPYVVTGSVDQTVKVWEC) are interaction with DCX. Residues 388-410 (FHKTAPYVVTGSVDQTVKVWECR) are interaction with NDEL1.

The protein belongs to the WD repeat LIS1/nudF family. Can self-associate. Component of the cytosolic PAF-AH (I) heterotetrameric enzyme, which is composed of PAFAH1B1 (beta), PAFAH1B2 (alpha2) and PAFAH1B3 (alpha1) subunits. The catalytic activity of the enzyme resides in the alpha1 (PAFAH1B3) and alpha2 (PAFAH1B2) subunits, whereas the beta subunit (PAFAH1B1) has regulatory activity. Trimer formation is not essential for the catalytic activity. Interacts with the catalytic dimer of PAF-AH (I) heterotetrameric enzyme: interacts with PAFAH1B2 homodimer (alpha2/alpha2 homodimer), PAFAH1B3 homodimer (alpha1/alpha1 homodimer) and PAFAH1B2-PAFAH1B3 heterodimer (alpha2/alpha1 heterodimer). Interacts with DCX, dynein, dynactin, IQGAP1, KATNB1, NDE1, NDEL1, NUDC and RSN. Interacts with DISC1, and this interaction is enhanced by NDEL1. Interacts with DAB1 when DAB1 is phosphorylated in response to RELN/reelin signaling. Interacts with INTS13. Interacts with DCDC1.

The protein resides in the cytoplasm. It is found in the cytoskeleton. The protein localises to the microtubule organizing center. Its subcellular location is the centrosome. It localises to the spindle. The protein resides in the nucleus membrane. Regulatory subunit (beta subunit) of the cytosolic type I platelet-activating factor (PAF) acetylhydrolase (PAF-AH (I)), an enzyme that catalyzes the hydrolyze of the acetyl group at the sn-2 position of PAF and its analogs and participates in PAF inactivation. Regulates the PAF-AH (I) activity in a catalytic dimer composition-dependent manner. Positively regulates the activity of the minus-end directed microtubule motor protein dynein. May enhance dynein-mediated microtubule sliding by targeting dynein to the microtubule plus end. Required for several dynein- and microtubule-dependent processes such as the maintenance of Golgi integrity, the peripheral transport of microtubule fragments and the coupling of the nucleus and centrosome. Required during brain development for the proliferation of neuronal precursors and the migration of newly formed neurons from the ventricular/subventricular zone toward the cortical plate. Neuronal migration involves a process called nucleokinesis, whereby migrating cells extend an anterior process into which the nucleus subsequently translocates. During nucleokinesis dynein at the nuclear surface may translocate the nucleus towards the centrosome by exerting force on centrosomal microtubules. Also required for proper activation of Rho GTPases and actin polymerization at the leading edge of locomoting cerebellar neurons and postmigratory hippocampal neurons in response to calcium influx triggered via NMDA receptors. May also play a role in other forms of cell locomotion including the migration of fibroblasts during wound healing. Required for dynein recruitment to microtubule plus ends and BICD2-bound cargos. May modulate the Reelin pathway through interaction of the PAF-AH (I) catalytic dimer with VLDLR. This chain is Platelet-activating factor acetylhydrolase IB subunit beta, found in Felis catus (Cat).